Consider the following 190-residue polypeptide: dTTP/UTP pyrophosphatase (190 aa).

Residue aspartate 70 is the Proton acceptor of the active site.

Belongs to the Maf family. YhdE subfamily. A divalent metal cation is required as a cofactor.

The protein localises to the cytoplasm. The enzyme catalyses dTTP + H2O = dTMP + diphosphate + H(+). It carries out the reaction UTP + H2O = UMP + diphosphate + H(+). In terms of biological role, nucleoside triphosphate pyrophosphatase that hydrolyzes dTTP and UTP. May have a dual role in cell division arrest and in preventing the incorporation of modified nucleotides into cellular nucleic acids. The sequence is that of dTTP/UTP pyrophosphatase from Gloeobacter violaceus (strain ATCC 29082 / PCC 7421).